The sequence spans 120 residues: NAD(P)H-quinone oxidoreductase subunit 3, chloroplastic (120 aa).

The next 3 helical transmembrane spans lie at 7 to 27, 64 to 84, and 89 to 109; these read YQTF…ALLI, SFAL…PWAM, and LGIF…IGLV.

The protein belongs to the complex I subunit 3 family. NDH is composed of at least 16 different subunits, 5 of which are encoded in the nucleus.

Its subcellular location is the plastid. It is found in the chloroplast thylakoid membrane. The catalysed reaction is a plastoquinone + NADH + (n+1) H(+)(in) = a plastoquinol + NAD(+) + n H(+)(out). It carries out the reaction a plastoquinone + NADPH + (n+1) H(+)(in) = a plastoquinol + NADP(+) + n H(+)(out). NDH shuttles electrons from NAD(P)H:plastoquinone, via FMN and iron-sulfur (Fe-S) centers, to quinones in the photosynthetic chain and possibly in a chloroplast respiratory chain. The immediate electron acceptor for the enzyme in this species is believed to be plastoquinone. Couples the redox reaction to proton translocation, and thus conserves the redox energy in a proton gradient. In Psilotum nudum (Whisk fern), this protein is NAD(P)H-quinone oxidoreductase subunit 3, chloroplastic.